We begin with the raw amino-acid sequence, 600 residues long: Aspartate--tRNA(Asp/Asn) ligase (600 aa).

Glu-175 lines the L-aspartate pocket. The segment at 199 to 202 is aspartate; that stretch reads QLFK. Residue Arg-221 coordinates L-aspartate. ATP contacts are provided by residues 221-223 and Gln-230; that span reads RDE. His-453 serves as a coordination point for L-aspartate. Position 487 (Glu-487) interacts with ATP. Position 494 (Arg-494) interacts with L-aspartate. ATP is bound at residue 539–542; sequence GWDR. The disordered stretch occupies residues 564–600; the sequence is GGVDPLTDAPAPITPLQRKESGIDAKPKAAENKPEEK. The span at 580-600 shows a compositional bias: basic and acidic residues; that stretch reads QRKESGIDAKPKAAENKPEEK.

This sequence belongs to the class-II aminoacyl-tRNA synthetase family. Type 1 subfamily. As to quaternary structure, homodimer.

It is found in the cytoplasm. The enzyme catalyses tRNA(Asx) + L-aspartate + ATP = L-aspartyl-tRNA(Asx) + AMP + diphosphate. Its function is as follows. Aspartyl-tRNA synthetase with relaxed tRNA specificity since it is able to aspartylate not only its cognate tRNA(Asp) but also tRNA(Asn). Reaction proceeds in two steps: L-aspartate is first activated by ATP to form Asp-AMP and then transferred to the acceptor end of tRNA(Asp/Asn). This is Aspartate--tRNA(Asp/Asn) ligase from Corynebacterium efficiens (strain DSM 44549 / YS-314 / AJ 12310 / JCM 11189 / NBRC 100395).